Here is a 456-residue protein sequence, read N- to C-terminus: tRNA (guanine(37)-N(1))-methyltransferase (456 aa).

S-adenosyl-L-methionine is bound by residues His-246, 284–285, 310–311, and Asn-336; these read DL and DG.

This sequence belongs to the class I-like SAM-binding methyltransferase superfamily. TRM5/TYW2 family. As to quaternary structure, monomer.

It localises to the mitochondrion matrix. The protein localises to the nucleus. The protein resides in the cytoplasm. The enzyme catalyses guanosine(37) in tRNA + S-adenosyl-L-methionine = N(1)-methylguanosine(37) in tRNA + S-adenosyl-L-homocysteine + H(+). Its function is as follows. Specifically methylates the N1 position of guanosine-37 in various cytoplasmic and mitochondrial tRNAs. Methylation is not dependent on the nature of the nucleoside 5' of the target nucleoside. This is the first step in the biosynthesis of wybutosine (yW), a modified base adjacent to the anticodon of tRNAs and required for accurate decoding. In Ciona intestinalis (Transparent sea squirt), this protein is tRNA (guanine(37)-N(1))-methyltransferase.